A 108-amino-acid chain; its full sequence is DNA-directed RNA polymerase III subunit RPC10 (108 aa).

6 residues coordinate Zn(2+): cysteine 5, cysteine 8, cysteine 25, cysteine 28, cysteine 69, and cysteine 72. The C4-type zinc-finger motif lies at 5–28 (CPGCGNGLIVEEGQRCHRFACNTC). A TFIIS-type zinc finger spans residues 65-107 (TAEPCPKCEHPRAYFMQLQTRSADEPMTTFYKCCNAQCGHRWR). The short motif at 88 to 89 (DE) is the Hairpin element. Residues cysteine 98 and cysteine 102 each contribute to the Zn(2+) site.

The protein belongs to the archaeal RpoM/eukaryotic RPA12/RPB9/RPC11 RNA polymerase family. Component of the RNA polymerase III complex consisting of 17 subunits: a ten-subunit horseshoe-shaped catalytic core composed of POLR3A/RPC1, POLR3B/RPC2, POLR1C/RPAC1, POLR1D/RPAC2, POLR3K/RPC10, POLR2E/RPABC1, POLR2F/RPABC2, POLR2H/RPABC3, POLR2K/RPABC4 and POLR2L/RPABC5; a mobile stalk composed of two subunits POLR3H/RPC8 and CRCP/RPC9, protruding from the core and functioning primarily in transcription initiation; and additional subunits homologous to general transcription factors of the RNA polymerase II machinery, POLR3C/RPC3-POLR3F/RPC6-POLR3G/RPC7 heterotrimer required for transcription initiation and POLR3D/RPC4-POLR3E/RPC5 heterodimer involved in both transcription initiation and termination.

It localises to the nucleus. Functionally, core component of RNA polymerase III (Pol III) which synthesizes small non-coding RNAs using the four ribonucleoside triphosphates as substrates. Can mediate Pol I proofreading of the nascent RNA transcript. Anchors into the Pol III active site to constantly monitor transcription fidelity, cleaves mis-incorporated 5'-ribonucleotides and restarts the transcription process. Once Pol III reaches the poly(dT) termination signal, can induce Pol III clamp opening and transcription termination. Pol III plays an important role in sensing and limiting infection by intracellular bacteria and DNA viruses. Acts as a nuclear and cytosolic DNA sensor involved in innate immune response. Can sense non-self dsDNA that serves as template for transcription into dsRNA. The non-self RNA polymerase III transcripts, such as Epstein-Barr virus-encoded RNAs (EBERs) induce type I interferon and NF-kappa-B through the RIG-I pathway. This Mus musculus (Mouse) protein is DNA-directed RNA polymerase III subunit RPC10.